Reading from the N-terminus, the 93-residue chain is MPRSVKKGPIVASHLLAKIEKQKNLKNKKVIQTWSRSSTITPIFVGHKIAVYNGREHIPVYITENMVGHKLGEFSPTRTYRGHNKKDKKIQKK.

Residues 73–93 form a disordered region; sequence EFSPTRTYRGHNKKDKKIQKK. Positions 80 to 93 are enriched in basic residues; it reads YRGHNKKDKKIQKK.

Belongs to the universal ribosomal protein uS19 family.

Its function is as follows. Protein S19 forms a complex with S13 that binds strongly to the 16S ribosomal RNA. In Aster yellows phytoplasma, this protein is Small ribosomal subunit protein uS19 (rpsS).